Reading from the N-terminus, the 283-residue chain is Myeloid differentiation primary response protein MyD88-B (283 aa).

The region spanning 27–105 (RLCLYLNPNA…DILTDLAPLI (79 aa)) is the Death domain. The segment at 106–143 (EADCKKYLEKKHGPLPLQDDNVDSSEQYRITKSDDPYG) is intermediate domain. In terms of domain architecture, TIR spans 147-281 (ETFDAFICCC…WFWDKLAKAL (135 aa)).

The protein localises to the cytoplasm. In terms of biological role, adapter protein involved in the Toll-like receptor and IL-1 receptor signaling pathway in the innate immune response. Activates expression of target genes in the Spemann organizer region during early embryonic development. Is required for normal axis formation. This is Myeloid differentiation primary response protein MyD88-B (myd88-b) from Xenopus laevis (African clawed frog).